Here is a 415-residue protein sequence, read N- to C-terminus: Diaminopimelate decarboxylase (415 aa).

At K60 the chain carries N6-(pyridoxal phosphate)lysine. Residues G239 and 274 to 277 (EPGR) contribute to the pyridoxal 5'-phosphate site. R277, R313, and Y317 together coordinate substrate. The active-site Proton donor is C344. E345 and Y372 together coordinate substrate. Y372 contributes to the pyridoxal 5'-phosphate binding site.

This sequence belongs to the Orn/Lys/Arg decarboxylase class-II family. LysA subfamily. In terms of assembly, homodimer. The cofactor is pyridoxal 5'-phosphate.

It catalyses the reaction meso-2,6-diaminopimelate + H(+) = L-lysine + CO2. The protein operates within amino-acid biosynthesis; L-lysine biosynthesis via DAP pathway; L-lysine from DL-2,6-diaminopimelate: step 1/1. Specifically catalyzes the decarboxylation of meso-diaminopimelate (meso-DAP) to L-lysine. The polypeptide is Diaminopimelate decarboxylase (Haemophilus influenzae (strain ATCC 51907 / DSM 11121 / KW20 / Rd)).